We begin with the raw amino-acid sequence, 293 residues long: Protease HtpX (293 aa).

Helical transmembrane passes span Ile4–Leu24 and Val32–Leu52. His139 is a Zn(2+) binding site. Residue Glu140 is part of the active site. His143 lines the Zn(2+) pocket. Transmembrane regions (helical) follow at residues Val158–Leu178 and Leu193–Ile213. Position 222 (Glu222) interacts with Zn(2+).

This sequence belongs to the peptidase M48B family. Zn(2+) serves as cofactor.

The protein resides in the cell inner membrane. This is Protease HtpX from Cronobacter sakazakii (strain ATCC BAA-894) (Enterobacter sakazakii).